The primary structure comprises 527 residues: Serine/threonine-protein kinase NLK (527 aa).

Sufficient for interaction with DAPK3 regions lie at residues 1-125 (MSLC…KAHH) and 124-416 (HHHQ…SKRI). Required for interaction with TAB2 regions lie at residues 1–304 (MSLC…VVTQ) and 434–527 (YHTC…LVWE). Disordered regions lie at residues 22–72 (AAAA…SSAA) and 90–139 (QQPY…LDIE). The span at 26-54 (GHHHHHHHHLPHLPPPHLHHHHHPQHHLH) shows a compositional bias: basic residues. A compositionally biased stretch (low complexity) spans 103 to 119 (PGPAAAAPAQVQAAAAA). Positions 122-131 (KAHHHQHSHH) are enriched in basic residues. The Protein kinase domain occupies 138 to 427 (IEPDRPIGYG…AKDALAHPYL (290 aa)). ATP contacts are provided by residues 144 to 152 (IGYGAFGVV) and lysine 167. Aspartate 264 acts as the Proton acceptor in catalysis. Residue threonine 298 is modified to Phosphothreonine; by autocatalysis. Positions 298–300 (TQE) match the TQE motif. A required for homodimerization and kinase activation and localization to the nucleus region spans residues 428–527 (DEGRLRYHTC…EMPPSPLVWE (100 aa)). Residue serine 522 is modified to Phosphoserine.

The protein belongs to the protein kinase superfamily. CMGC Ser/Thr protein kinase family. MAP kinase subfamily. Homodimer. Homodimerization is required for intermolecular autophosphorylation, kinase activation and nuclear localization. Interacts with RNF138/NARF. Interacts with FOXO1 and FOXO3. Interacts with the upstream activating kinases HIPK2 and MAP3K7/TAK1. Interaction with MAP3K7/TAK1 seems to be indirect, and may be mediated by other proteins such as STAT3, TAB1 and TAB2. Interacts with and phosphorylates a number of transcription factors including FOXO4, LEF1, MYB, MYBL1, MYBL2, NOTCH1 and TCF7L2/TCF4. May interact with components of cullin-RING-based SCF (SKP1-CUL1-F-box protein) E3 ubiquitin-protein ligase complexes. Interacts with MEF2A. Interacts with ATF5; the interaction stabilizes ATF5 at the protein level in a kinase-independent manner. The cofactor is Mg(2+). In terms of processing, phosphorylated on Thr-298. Intermolecular autophosphorylation on Thr-298 activates the enzyme. In terms of tissue distribution, expressed at high levels in the brain, and at lower levels in heart, kidney, lung and liver.

It is found in the nucleus. Its subcellular location is the cytoplasm. It carries out the reaction L-seryl-[protein] + ATP = O-phospho-L-seryl-[protein] + ADP + H(+). The catalysed reaction is L-threonyl-[protein] + ATP = O-phospho-L-threonyl-[protein] + ADP + H(+). With respect to regulation, activated by the non-canonical Wnt signaling pathway, in which WNT5A leads to activation of MAP3K7/TAK1 and HIPK2, which subsequently phosphorylates and activates this protein. Activated by dimerization and subsequent intermolecular autophosphorylation on Thr-298. Other cytokines such as IL6 may also activate this regulatory circuit. In terms of biological role, serine/threonine-protein kinase that regulates a number of transcription factors with key roles in cell fate determination. Positive effector of the non-canonical Wnt signaling pathway, acting downstream of WNT5A, MAP3K7/TAK1 and HIPK2. Negative regulator of the canonical Wnt/beta-catenin signaling pathway. Binds to and phosphorylates TCF7L2/TCF4 and LEF1, promoting the dissociation of the TCF7L2/LEF1/beta-catenin complex from DNA, as well as the ubiquitination and subsequent proteolysis of LEF1. Together these effects inhibit the transcriptional activation of canonical Wnt/beta-catenin target genes. Negative regulator of the Notch signaling pathway. Binds to and phosphorylates NOTCH1, thereby preventing the formation of a transcriptionally active ternary complex of NOTCH1, RBPJ/RBPSUH and MAML1. Negative regulator of the MYB family of transcription factors. Phosphorylation of MYB leads to its subsequent proteolysis while phosphorylation of MYBL1 and MYBL2 inhibits their interaction with the coactivator CREBBP. Other transcription factors may also be inhibited by direct phosphorylation of CREBBP itself. Acts downstream of IL6 and MAP3K7/TAK1 to phosphorylate STAT3, which is in turn required for activation of NLK by MAP3K7/TAK1. Upon IL1B stimulus, cooperates with ATF5 to activate the transactivation activity of C/EBP subfamily members. Phosphorylates ATF5 but also stabilizes ATF5 protein levels in a kinase-independent manner. Acts as an inhibitor of the mTORC1 complex in response to osmotic stress by mediating phosphorylation of RPTOR, thereby preventing recruitment of the mTORC1 complex to lysosomes. The protein is Serine/threonine-protein kinase NLK of Mus musculus (Mouse).